We begin with the raw amino-acid sequence, 87 residues long: Large ribosomal subunit protein bL28 (87 aa).

Belongs to the bacterial ribosomal protein bL28 family.

This chain is Large ribosomal subunit protein bL28, found in Akkermansia muciniphila (strain ATCC BAA-835 / DSM 22959 / JCM 33894 / BCRC 81048 / CCUG 64013 / CIP 107961 / Muc).